The sequence spans 473 residues: Knob-associated histidine-rich protein (473 aa).

Residues 1–34 form the signal peptide; the sequence is MKSFKNKNTLRRKKAFPVFTKILLVSFLVWVLKC. The N-linked (GlcNAc...) asparagine glycan is linked to Asn42. Residues 57–87 are compositionally biased toward basic residues; the sequence is AQKQHEHHHHHHHQHQHQHQAPHQAHHHHHH. 2 disordered regions span residues 57 to 143 and 347 to 473; these read AQKQ…QVFR and SSVN…DGSK. Positions 95–104 are enriched in low complexity; the sequence is PQVHQQVHGQ. The segment covering 108–117 has biased composition (basic residues); the sequence is HHHHHHHHHQ. 2 stretches are compositionally biased toward basic and acidic residues: residues 354-375 and 396-405; these read KHGD…EGEK and KDNEDAESVK. Residues 406 to 422 are compositionally biased toward basic residues; that stretch reads SKKHKSHDCEKKKSKKH. 2 stretches are compositionally biased toward basic and acidic residues: residues 423–444 and 453–473; these read KDNE…GEKH and KTNE…DGSK.

It is found in the secreted. Its function is as follows. KAHRP might mimick human histidine-rich glycoproteins to anchor host thrombospondin or a parasite analog in a binding complex with the endothelial cell receptor. This chain is Knob-associated histidine-rich protein, found in Plasmodium falciparum.